A 442-amino-acid polypeptide reads, in one-letter code: C4-dicarboxylate transport protein (442 aa).

A run of 8 helical transmembrane segments spans residues 10-30, 40-60, 77-97, 149-169, 185-205, 221-241, 288-308, and 354-374; these read VQVLIAIVLGILVGFLFPSFG, FIKLIKMLIAPIIFATVVSGI, LIYFEVVTTFALVIGLVVANI, LLQVLLISVLFGFALTQLGTL, FVILGFVMRLAPIGAFGAMAF, LMVAFYATCLLFVFVVLGLIA, VVGLVVPAGYSFNLDGTSIYL, and AATLSAVGHVPVAGLALILGI. A disordered region spans residues 420–442; the sequence is PATPEVAAEERGEGRGLDGPLPA.

This sequence belongs to the dicarboxylate/amino acid:cation symporter (DAACS) (TC 2.A.23) family.

It is found in the cell membrane. Functionally, responsible for the transport of dicarboxylates such as succinate, fumarate, and malate across the membrane. The sequence is that of C4-dicarboxylate transport protein from Deinococcus geothermalis (strain DSM 11300 / CIP 105573 / AG-3a).